Here is a 134-residue protein sequence, read N- to C-terminus: Ribonuclease P protein component (134 aa).

The protein belongs to the RnpA family. Consists of a catalytic RNA component (M1 or rnpB) and a protein subunit.

The catalysed reaction is Endonucleolytic cleavage of RNA, removing 5'-extranucleotides from tRNA precursor.. In terms of biological role, RNaseP catalyzes the removal of the 5'-leader sequence from pre-tRNA to produce the mature 5'-terminus. It can also cleave other RNA substrates such as 4.5S RNA. The protein component plays an auxiliary but essential role in vivo by binding to the 5'-leader sequence and broadening the substrate specificity of the ribozyme. The chain is Ribonuclease P protein component from Ectopseudomonas mendocina (strain ymp) (Pseudomonas mendocina).